We begin with the raw amino-acid sequence, 135 residues long: MAELIEYYGTGRRKTAVARVHLRPGNGKIKINGKEYKSLVEYLRGNEVWEIEALKPLTVTSTNGQFDLVIRVNGGGLSGQAGAIRLGIARALLSYDESFRPILKKEGLLTRDPREVERKKYGLRKARKRAQFSKR.

This sequence belongs to the universal ribosomal protein uS9 family.

This chain is Small ribosomal subunit protein uS9, found in Petrotoga mobilis (strain DSM 10674 / SJ95).